A 167-amino-acid chain; its full sequence is 3-dehydroquinate dehydratase (167 aa).

Tyr22 serves as the catalytic Proton acceptor. The substrate site is built by Asn76, His82, and Asp89. His102 serves as the catalytic Proton donor. Substrate is bound by residues 103–104 (LT) and Arg113.

Belongs to the type-II 3-dehydroquinase family. As to quaternary structure, homododecamer.

It carries out the reaction 3-dehydroquinate = 3-dehydroshikimate + H2O. Its pathway is metabolic intermediate biosynthesis; chorismate biosynthesis; chorismate from D-erythrose 4-phosphate and phosphoenolpyruvate: step 3/7. Functionally, catalyzes a trans-dehydration via an enolate intermediate. The protein is 3-dehydroquinate dehydratase of Helicobacter pylori (strain P12).